A 951-amino-acid polypeptide reads, in one-letter code: Metal transporter CNNM1 (951 aa).

A helical membrane pass occupies residues 23–43; sequence AVLLLFFSLSPRPPAAAAWLL. Residues 116-135 form a disordered region; that stretch reads GGVAPSAVPTRPPGPQRCRE. The CNNM transmembrane domain occupies 218–414; the sequence is LLPPAWLRAL…DPYSDLVKEE (197 aa). Helical transmembrane passes span 222-242, 282-302, and 321-341; these read AWLR…FSGL, LLCT…GWLY, and IHFP…GAEI. CBS domains are found at residues 433-495 and 502-568; these read LTPL…CTPL and YNRP…ILDE. 2 stretches are compositionally biased toward polar residues: residues 731 to 740 and 814 to 824; these read SRCSGLNRSE and KAPTTRGTPQT. Disordered stretches follow at residues 731-753 and 795-830; these read SRCS…GGSN and MDSS…DDPA. Phosphothreonine occurs at positions 821 and 824. Serine 850 is subject to Phosphoserine. Residues 920–951 are disordered; sequence KLLRTLSGQKRKRSPEGERTSEDNSNLTPLIT. Over residues 942-951 the composition is skewed to polar residues; that stretch reads DNSNLTPLIT.

This sequence belongs to the ACDP family. Restricted to brain and testis.

The protein localises to the cell membrane. Probable metal transporter. This chain is Metal transporter CNNM1 (CNNM1), found in Homo sapiens (Human).